A 408-amino-acid chain; its full sequence is Na(+)-translocating NADH-quinone reductase subunit F (408 aa).

A helical transmembrane segment spans residues 6-26 (IILGVVMFTAIVLALVAIILA). Positions 35–127 (GDVTIRINGE…DMDVEVPEEV (93 aa)) constitute a 2Fe-2S ferredoxin-type domain. The [2Fe-2S] cluster site is built by cysteine 70, cysteine 76, cysteine 79, and cysteine 111. Positions 130–270 (VKAWECTVES…YGPFGEFFAK (141 aa)) constitute an FAD-binding FR-type domain.

It belongs to the NqrF family. Composed of six subunits; NqrA, NqrB, NqrC, NqrD, NqrE and NqrF. [2Fe-2S] cluster serves as cofactor. It depends on FAD as a cofactor.

It is found in the cell inner membrane. The enzyme catalyses a ubiquinone + n Na(+)(in) + NADH + H(+) = a ubiquinol + n Na(+)(out) + NAD(+). NQR complex catalyzes the reduction of ubiquinone-1 to ubiquinol by two successive reactions, coupled with the transport of Na(+) ions from the cytoplasm to the periplasm. The first step is catalyzed by NqrF, which accepts electrons from NADH and reduces ubiquinone-1 to ubisemiquinone by a one-electron transfer pathway. The polypeptide is Na(+)-translocating NADH-quinone reductase subunit F (Marinomonas sp. (strain MWYL1)).